The following is a 180-amino-acid chain: Ubiquitin-conjugating enzyme E2 20 (180 aa).

The tract at residues 1 to 33 is disordered; sequence MAAVNGYQGNTPADPPASNGSKQPAAPTKTVDS. In terms of domain architecture, UBC core spans 35–180; that stretch reads SVLKRLQSEL…VEKLYKPPSA (146 aa). Cys119 acts as the Glycyl thioester intermediate in catalysis.

It belongs to the ubiquitin-conjugating enzyme family. As to expression, expressed in all tissues with cell division activities and in mature leaves.

The enzyme catalyses S-ubiquitinyl-[E1 ubiquitin-activating enzyme]-L-cysteine + [E2 ubiquitin-conjugating enzyme]-L-cysteine = [E1 ubiquitin-activating enzyme]-L-cysteine + S-ubiquitinyl-[E2 ubiquitin-conjugating enzyme]-L-cysteine.. Its pathway is protein modification; protein ubiquitination. Accepts the ubiquitin from the E1 complex and catalyzes its covalent attachment to other proteins. The sequence is that of Ubiquitin-conjugating enzyme E2 20 (UBC20) from Arabidopsis thaliana (Mouse-ear cress).